The primary structure comprises 147 residues: Ubiquitin-conjugating enzyme E2 D4 (147 aa).

Residues 1 to 147 (MALKRIQKEL…AREWTQKYAM (147 aa)) enclose the UBC core domain. The active-site Glycyl thioester intermediate is the Cys-85.

This sequence belongs to the ubiquitin-conjugating enzyme family.

The enzyme catalyses S-ubiquitinyl-[E1 ubiquitin-activating enzyme]-L-cysteine + [E2 ubiquitin-conjugating enzyme]-L-cysteine = [E1 ubiquitin-activating enzyme]-L-cysteine + S-ubiquitinyl-[E2 ubiquitin-conjugating enzyme]-L-cysteine.. The protein operates within protein modification; protein ubiquitination. Its function is as follows. Accepts ubiquitin from the E1 complex and catalyzes its covalent attachment to other proteins. In vitro able to promote polyubiquitination using all 7 ubiquitin Lys residues, but may prefer 'Lys-11' and 'Lys-48'-linked polyubiquitination. The polypeptide is Ubiquitin-conjugating enzyme E2 D4 (UBE2D4) (Homo sapiens (Human)).